Reading from the N-terminus, the 66-residue chain is U-scoloptoxin(04)-Ssd2a (66 aa).

Residues 1 to 19 (MKAIYILSVLLLMMLPILS) form the signal peptide.

Belongs to the scoloptoxin-04 family. In terms of processing, contains 2 disulfide bonds. Expressed by the venom gland.

Its subcellular location is the secreted. This chain is U-scoloptoxin(04)-Ssd2a, found in Scolopendra dehaani (Thai centipede).